A 351-amino-acid polypeptide reads, in one-letter code: V-type proton ATPase subunit d2 (351 aa).

It belongs to the V-ATPase V0D/AC39 subunit family. As to quaternary structure, V-ATPase is a heteromultimeric enzyme composed of a peripheral catalytic V1 complex (components A to H) attached to an integral membrane V0 proton pore complex (components: a, c, c'', d and e).

The protein resides in the vacuole membrane. Its function is as follows. Subunit of the integral membrane V0 complex of vacuolar ATPase. Vacuolar ATPase is responsible for acidifying a variety of intracellular compartments in eukaryotic cells, thus providing most of the energy required for transport processes in the vacuolar system. The sequence is that of V-type proton ATPase subunit d2 (VHA-d2) from Arabidopsis thaliana (Mouse-ear cress).